The chain runs to 581 residues: Arginine--tRNA ligase (581 aa).

The short motif at 131–141 is the 'HIGH' region element; sequence ANPTGPMHVGH.

Belongs to the class-I aminoacyl-tRNA synthetase family. Monomer.

It is found in the cytoplasm. It carries out the reaction tRNA(Arg) + L-arginine + ATP = L-arginyl-tRNA(Arg) + AMP + diphosphate. This Paracoccus denitrificans (strain Pd 1222) protein is Arginine--tRNA ligase.